A 95-amino-acid polypeptide reads, in one-letter code: LSM complex subunit LSM2 (95 aa).

The Sm domain maps to 2-76 (LFFSFFKTLV…VRYVYLNKNM (75 aa)).

The protein belongs to the snRNP Sm proteins family. Component of the heptameric LSM1-LSM7 complex that forms a seven-membered ring structure with a donut shape. The LSm subunits are arranged in the order LSM1, LSM2, LSM3, LSM6, LSM5, LSM7 and LSM4. Except for LSM1, where a C-terminal helix crosses the ring structure to form additional interactions with LSM3 and LSM6, each subunit interacts only with its two neighboring subunits. The LSM1-LSM7 complex interacts with PAT1; within the complex PAT1 has direct interactions with LSM2 and LSM3. The LSM1-LSM7 complex interacts with XRN1. Component of the heptameric LSM2-LSM8 complex that forms a seven-membered ring structure with a donut shape; an RNA strand can pass through the hole in the center of the ring structure. The LSm subunits are arranged in the order LSM8, LSM2, LSM3, LSM6, LSM5, LSM7 and LSM4. Interacts with U6 snRNA SNR6 and chaperone PRP24; to promote formation of the U4/U6-U5 tri-snRNP (small nuclear ribonucleoprotein) complex, the LSM2-LSM8 complex preferentially binds U6 snRNA that has been modified to contain a non-cyclic 3' phosphate. Component of the spliceosome U4/U6-U5 tri-snRNP complex composed of the U4, U6 and U5 snRNAs and at least PRP3, PRP4, PRP6, PRP8, PRP18, PRP31, PRP38, SNU13, SNU23, SNU66, SNU114, SPP381, SMB1, SMD1, SMD2, SMD3, SMX2, SMX3, LSM2, LSM3, LSM4, LSM5, LSM6, LSM7, LSM8, BRR2 and DIB1. May be found in a complex comprising LSM2-LSM7 without LSM1 or LSM8; the complex associates with pre-P RNA and snoRNA SNR5.

It localises to the nucleus. Its subcellular location is the nucleolus. The protein resides in the cytoplasm. In terms of biological role, component of LSm protein complexes, which are involved in RNA processing and may function in a chaperone-like manner. Component of the cytoplasmic LSM1-LSM7 complex which is involved in mRNA degradation by activating the decapping step. Together with PAT1, the LSM1-LSM7 complex binds to osmotic stress-activated mRNAs to attenuate the osmotic stress response, probably by limiting ribosome access to the mRNA and consequently translation. Component of the nuclear LSM2-LSM8 complex, which is involved in spliceosome assembly. The LSM2-LSM8 complex plays a role in the biogenesis of the spliceosomal U4/U6-U5 tri-snRNP complex by accelerating PRP24-mediated annealing of U4/U6 di-snRNA. The LSM2-LSM8 complex binds U6 snRNA terminating with a non-cyclic 3' phosphate group. LSM2-LSM8 is probably also involved in degradation of nuclear pre-mRNA by targeting them for decapping. LSM2-LSM8 could be involved in processing of pre-tRNAs, pre-rRNAs and U3 snoRNA, although involvement may be indirect. In a complex that probably contains LSM2-LSM7, but not LSM1 or LSM8, associates with the precursor of the RNA component of RNase P (pre-P RNA) and may be involved in maturing pre-P RNA; the complex also associates with snoRNA SNR5. The sequence is that of LSM complex subunit LSM2 (LSM2) from Saccharomyces cerevisiae (strain ATCC 204508 / S288c) (Baker's yeast).